Consider the following 252-residue polypeptide: Large ribosomal subunit protein uL10m (252 aa).

A mitochondrion-targeting transit peptide spans 1–24 (MAATLCCRLLPKAGWVPLTQSVRH).

This sequence belongs to the universal ribosomal protein uL10 family. As to quaternary structure, component of the mitochondrial ribosome large subunit (39S) which comprises a 16S rRNA and about 50 distinct proteins.

The protein localises to the mitochondrion. This Danio rerio (Zebrafish) protein is Large ribosomal subunit protein uL10m (mrpl10).